Reading from the N-terminus, the 439-residue chain is Testican-1 (439 aa).

The N-terminal stretch at 1 to 21 is a signal peptide; it reads MPAIAVLAAAAAAWCFLQVES. 5 disulfides stabilise this stretch: cysteine 86–cysteine 97, cysteine 91–cysteine 107, cysteine 136–cysteine 166, cysteine 139–cysteine 159, and cysteine 148–cysteine 180. In terms of domain architecture, Kazal-like spans 130 to 182; the sequence is PSNLVKCKPCPVAQSAMVCGSDGHSYTSKCKLEFHACSTGKSLATLCDGPCPC. An O-linked (GalNAc...) threonine glycan is attached at threonine 228. Positions 310–376 constitute a Thyroglobulin type-1 domain; the sequence is GLPCQNEMNR…GSRKQGAVSC (67 aa). 3 disulfides stabilise this stretch: cysteine 313/cysteine 337, cysteine 348/cysteine 355, and cysteine 357/cysteine 376. O-linked (Xyl...) (glycosaminoglycan) serine glycans are attached at residues serine 383 and serine 388. The tract at residues 415-439 is disordered; sequence VHTRAVTEDDEDEDDDKEDEVGYIW. Over residues 422–439 the composition is skewed to acidic residues; that stretch reads EDDEDEDDDKEDEVGYIW.

In terms of processing, O-glycosylated. Glycosaminoglycan that contains chondroitin sulfate and heparan sulfate.

The protein resides in the secreted. The protein localises to the extracellular space. Its subcellular location is the extracellular matrix. Functionally, may play a role in cell-cell and cell-matrix interactions. May contribute to various neuronal mechanisms in the central nervous system. The protein is Testican-1 (SPOCK1) of Homo sapiens (Human).